The following is a 249-amino-acid chain: 2-C-methyl-D-erythritol 4-phosphate cytidylyltransferase (249 aa).

Belongs to the IspD/TarI cytidylyltransferase family. IspD subfamily.

The catalysed reaction is 2-C-methyl-D-erythritol 4-phosphate + CTP + H(+) = 4-CDP-2-C-methyl-D-erythritol + diphosphate. The protein operates within isoprenoid biosynthesis; isopentenyl diphosphate biosynthesis via DXP pathway; isopentenyl diphosphate from 1-deoxy-D-xylulose 5-phosphate: step 2/6. Its function is as follows. Catalyzes the formation of 4-diphosphocytidyl-2-C-methyl-D-erythritol from CTP and 2-C-methyl-D-erythritol 4-phosphate (MEP). The sequence is that of 2-C-methyl-D-erythritol 4-phosphate cytidylyltransferase from Chromohalobacter salexigens (strain ATCC BAA-138 / DSM 3043 / CIP 106854 / NCIMB 13768 / 1H11).